The following is a 465-amino-acid chain: Cruciform DNA-recognizing protein 1 (465 aa).

2 disordered regions span residues 107 to 227 and 247 to 275; these read EAGG…VPNP and RLNKKEEVPEPVAGPIVESSVTEKSPALP. Positions 127–151 are enriched in basic residues; the sequence is NRKKNKRNNKKRKSKLKKKSTKNNK. A phosphoserine mark is found at Ser153 and Ser156. Residues 156 to 165 are compositionally biased toward acidic residues; the sequence is SXDDNEEEDX. Positions 160 to 161 are X-DNA-binding; sequence NE. Over residues 166 to 177 the composition is skewed to low complexity; the sequence is VTGTTTEDVTGT. Thr182 bears the Phosphothreonine mark. Ser271 carries the post-translational modification Phosphoserine. Thr295 is modified (phosphothreonine). The interval 312-465 is disordered; the sequence is PTPEAQISIP…FFGKLKKLFK (154 aa). Phosphoserine is present on residues Ser319 and Ser343. Residues 337 to 363 are compositionally biased toward basic and acidic residues; that stretch reads LVEKRESTEGVSDGSKKVENKAKKDEE. Phosphothreonine is present on Thr366. Composition is skewed to basic and acidic residues over residues 385 to 398 and 404 to 428; these read AEGRKSPAVSEEKE and EKGSKEVKRSETSKEKKPSAKEVKK. Ser394 carries the post-translational modification Phosphoserine. At Ser440 the chain carries Phosphoserine. Residues 451-465 are compositionally biased toward basic residues; the sequence is KKKTGFFGKLKKLFK.

The protein belongs to the CRP1/MDG1 family. Cleaved in the vicinity of position 160 to give an X-DNA-binding N-terminal subpeptide and a non-DNA-binding C-terminal subpeptide.

Functionally, cruciform DNA-binding protein which exerts an enhancing effect on the cleavage of cruciform DNA (X-DNA) by endonuclease VII from bacteriophage T4. This is Cruciform DNA-recognizing protein 1 (CRP1) from Saccharomyces cerevisiae (strain FostersB) (Baker's yeast).